The primary structure comprises 119 residues: Beta-2-microglobulin (119 aa).

The first 20 residues, 1 to 20 (MARFVVVALLVLLSLSGLEA), serve as a signal peptide directing secretion. Residues 25-114 (PKIQVYSRHP…VTLSTPKTVK (90 aa)) form the Ig-like C1-type domain. C45 and C100 are disulfide-bonded.

Belongs to the beta-2-microglobulin family. In terms of assembly, heterodimer of an alpha chain and a beta chain. Beta-2-microglobulin is the beta-chain of major histocompatibility complex class I molecules.

The protein localises to the secreted. Its function is as follows. Component of the class I major histocompatibility complex (MHC). Involved in the presentation of peptide antigens to the immune system. The sequence is that of Beta-2-microglobulin (B2M) from Aotus azarae (Azara's night monkey).